The following is a 908-amino-acid chain: Low affinity vacuolar monovalent cation/H(+) antiporter (908 aa).

Polar residues predominate over residues 1–15 (MAKNNHISASGNSTS). The disordered stretch occupies residues 1–20 (MAKNNHISASGNSTSGDHRL). Residues 1-244 (MAKNNHISAS…WEVTCSNVLW (244 aa)) lie on the Cytoplasmic side of the membrane. Position 26 is a phosphothreonine (Thr26). Residue Ser32 is modified to Phosphoserine. Residue Thr33 is modified to Phosphothreonine. Positions 68-147 (NKSKRSVSSQ…DDEDANDDSR (80 aa)) are disordered. Over residues 73 to 87 (SVSSQSPIVHSSNNT) the composition is skewed to low complexity. Polar residues predominate over residues 102–121 (ESLSSKSHSVPDLNTATPSS). The residue at position 110 (Ser110) is a Phosphoserine. The residue at position 118 (Thr118) is a Phosphothreonine. Ser121 carries the phosphoserine modification. The helical transmembrane segment at 245–265 (FILFGFPIAILFYSAAIVVFL) threads the bilayer. Over 266–408 (LGGGGLVTNS…GRVLFYTIFH (143 aa)) the chain is Vacuolar. The N-linked (GlcNAc...) asparagine glycan is linked to Asn361. A helical membrane pass occupies residues 409–429 (LVLQPILAVLSLCLWLLVFTI). The Cytoplasmic portion of the chain corresponds to 430 to 494 (PMSNVLWQIM…HYYKYTVDGT (65 aa)). A helical transmembrane segment spans residues 495 to 515 (NVIVVNLISIVFFTIFDFYVL). Topologically, residues 516–530 (KNFLHWKTWFTYESS) are vacuolar. Residues 531–551 (IFILCLTSTIPLAFYIGQAVA) traverse the membrane as a helical segment. Over 552–560 (SISAQTSMG) the chain is Cytoplasmic. Residues 561–581 (VGAVINAFFSTIVEIFLYCVA) traverse the membrane as a helical segment. Residues 582–587 (LQQKKG) are Vacuolar-facing. A helical transmembrane segment spans residues 588–608 (LLVEGSMIGSILGAVLLLPGL). The Cytoplasmic segment spans residues 609–626 (SMCGGALNRKTQRYNPAS). The helical transmembrane segment at 627 to 647 (AGVSSALLIFSMIVMFVPTVL) threads the bilayer. The Vacuolar segment spans residues 648 to 686 (YEIYGGYSVNCADGANDRDCTFSHPPLKFNRLFTHVIQP). A helical transmembrane segment spans residues 687–707 (MSISCAIVLFCAYIIGLWFTL). Over 708 to 746 (RTHAKMIWQLPIADPTSTAPEQQEQNSHDAPNWSRSKST) the chain is Cytoplasmic. The helical transmembrane segment at 747-767 (CILLMSTLLYAIIAEILVSCV) threads the bilayer. The Vacuolar segment spans residues 768 to 783 (DAVLEDIPSLNPKFLG). A helical membrane pass occupies residues 784–804 (LTIFALIPNTTEFLNAISFAI). The Cytoplasmic segment spans residues 805 to 816 (HGNVALSMEIGS). The chain crosses the membrane as a helical span at residues 817-837 (AYALQVCLLQIPSLVIYSIFY). At 838–851 (TWNVKKSMINIRTQ) the chain is on the vacuolar side. Residues 852 to 872 (MFPLVFPRWDIFGAMTSVFMF) form a helical membrane-spanning segment. Over 873 to 885 (TYLYAEGKSNYFK) the chain is Cytoplasmic. A helical transmembrane segment spans residues 886 to 906 (GSMLILLYIIIVVGFYFQGAL). Topologically, residues 907 to 908 (SE) are vacuolar.

Belongs to the Ca(2+):cation antiporter (CaCA) (TC 2.A.19) family.

Its subcellular location is the vacuole membrane. In terms of biological role, has a role in promoting intracellular monovalent cation sequestration via the exchange of monovalent cations and especially Na(+) for hydrogen ions across the vacuolar membrane. This is Low affinity vacuolar monovalent cation/H(+) antiporter (VNX1) from Saccharomyces cerevisiae (strain ATCC 204508 / S288c) (Baker's yeast).